Reading from the N-terminus, the 430-residue chain is Asparagine--tRNA ligase (430 aa).

The protein belongs to the class-II aminoacyl-tRNA synthetase family.

The protein resides in the cytoplasm. The enzyme catalyses tRNA(Asn) + L-asparagine + ATP = L-asparaginyl-tRNA(Asn) + AMP + diphosphate + H(+). The sequence is that of Asparagine--tRNA ligase from Thermococcus gammatolerans (strain DSM 15229 / JCM 11827 / EJ3).